The sequence spans 148 residues: MDASTKTKKGAGGRKGGPRKKSVTRSTRAGLQFPVGRIGRYLKKGRYAQRVGTGAPVYLAAVLEYLAAEVLELAGNAARDNKKNRIIPRHVLLAVRNDEELGKLLAGVTIAHGGVLPNINPILLPKKNEKAATTTKSPSKATKSPKKA.

Over residues 1–23 the composition is skewed to basic residues; that stretch reads MDASTKTKKGAGGRKGGPRKKSV. Disordered stretches follow at residues 1–28 and 127–148; these read MDASTKTKKGAGGRKGGPRKKSVTRSTR and KNEKAATTTKSPSKATKSPKKA. A compositionally biased stretch (low complexity) spans 131 to 142; it reads AATTTKSPSKAT. Short sequence motifs (SPKK motif) lie at residues 137-140 and 144-147; these read SPSK and SPKK.

This sequence belongs to the histone H2A family. In terms of assembly, the nucleosome is a histone octamer containing two molecules each of H2A, H2B, H3 and H4 assembled in one H3-H4 heterotetramer and two H2A-H2B heterodimers. The octamer wraps approximately 147 bp of DNA.

It localises to the nucleus. The protein localises to the chromosome. Core component of nucleosome. Nucleosomes wrap and compact DNA into chromatin, limiting DNA accessibility to the cellular machineries which require DNA as a template. Histones thereby play a central role in transcription regulation, DNA repair, DNA replication and chromosomal stability. DNA accessibility is regulated via a complex set of post-translational modifications of histones, also called histone code, and nucleosome remodeling. The chain is Probable histone H2A.1 from Medicago truncatula (Barrel medic).